The chain runs to 425 residues: Tol-Pal system protein TolB (425 aa).

The signal sequence occupies residues 1-25; that stretch reads MTRKHILSFALMTALGMTVTSTAFA.

Belongs to the TolB family. As to quaternary structure, the Tol-Pal system is composed of five core proteins: the inner membrane proteins TolA, TolQ and TolR, the periplasmic protein TolB and the outer membrane protein Pal. They form a network linking the inner and outer membranes and the peptidoglycan layer.

Its subcellular location is the periplasm. Its function is as follows. Part of the Tol-Pal system, which plays a role in outer membrane invagination during cell division and is important for maintaining outer membrane integrity. The protein is Tol-Pal system protein TolB of Acinetobacter baylyi (strain ATCC 33305 / BD413 / ADP1).